The chain runs to 198 residues: Ribonuclease HII (198 aa).

In terms of domain architecture, RNase H type-2 spans 10–198; sequence HLVAGVDEVG…PVKRALELAS (189 aa). The a divalent metal cation site is built by Asp16, Glu17, and Asp108.

It belongs to the RNase HII family. Mn(2+) serves as cofactor. Mg(2+) is required as a cofactor.

The protein localises to the cytoplasm. The catalysed reaction is Endonucleolytic cleavage to 5'-phosphomonoester.. Functionally, endonuclease that specifically degrades the RNA of RNA-DNA hybrids. The protein is Ribonuclease HII of Salmonella arizonae (strain ATCC BAA-731 / CDC346-86 / RSK2980).